Here is a 567-residue protein sequence, read N- to C-terminus: Adenine deaminase (567 aa).

It belongs to the metallo-dependent hydrolases superfamily. Adenine deaminase family. The cofactor is Mn(2+).

It carries out the reaction adenine + H2O + H(+) = hypoxanthine + NH4(+). The protein is Adenine deaminase of Methanothrix thermoacetophila (strain DSM 6194 / JCM 14653 / NBRC 101360 / PT) (Methanosaeta thermophila).